The chain runs to 218 residues: Probable transaldolase (218 aa).

K87 functions as the Schiff-base intermediate with substrate in the catalytic mechanism.

This sequence belongs to the transaldolase family. Type 3B subfamily.

It is found in the cytoplasm. It catalyses the reaction D-sedoheptulose 7-phosphate + D-glyceraldehyde 3-phosphate = D-erythrose 4-phosphate + beta-D-fructose 6-phosphate. Its pathway is carbohydrate degradation; pentose phosphate pathway; D-glyceraldehyde 3-phosphate and beta-D-fructose 6-phosphate from D-ribose 5-phosphate and D-xylulose 5-phosphate (non-oxidative stage): step 2/3. Transaldolase is important for the balance of metabolites in the pentose-phosphate pathway. The protein is Probable transaldolase of Flavobacterium psychrophilum (strain ATCC 49511 / DSM 21280 / CIP 103535 / JIP02/86).